We begin with the raw amino-acid sequence, 256 residues long: Thiazole synthase (256 aa).

Catalysis depends on Lys-98, which acts as the Schiff-base intermediate with DXP. 1-deoxy-D-xylulose 5-phosphate contacts are provided by residues Gly-159, 185-186 (AG), and 207-208 (NT).

The protein belongs to the ThiG family. Homotetramer. Forms heterodimers with either ThiH or ThiS.

The protein resides in the cytoplasm. The catalysed reaction is [ThiS sulfur-carrier protein]-C-terminal-Gly-aminoethanethioate + 2-iminoacetate + 1-deoxy-D-xylulose 5-phosphate = [ThiS sulfur-carrier protein]-C-terminal Gly-Gly + 2-[(2R,5Z)-2-carboxy-4-methylthiazol-5(2H)-ylidene]ethyl phosphate + 2 H2O + H(+). Its pathway is cofactor biosynthesis; thiamine diphosphate biosynthesis. Functionally, catalyzes the rearrangement of 1-deoxy-D-xylulose 5-phosphate (DXP) to produce the thiazole phosphate moiety of thiamine. Sulfur is provided by the thiocarboxylate moiety of the carrier protein ThiS. In vitro, sulfur can be provided by H(2)S. The polypeptide is Thiazole synthase (Syntrophobacter fumaroxidans (strain DSM 10017 / MPOB)).